A 63-amino-acid chain; its full sequence is Large ribosomal subunit protein uL29 (63 aa).

This sequence belongs to the universal ribosomal protein uL29 family.

In Listeria innocua serovar 6a (strain ATCC BAA-680 / CLIP 11262), this protein is Large ribosomal subunit protein uL29.